The chain runs to 223 residues: Killer cell lectin-like receptor subfamily B member 1B allele A (223 aa).

Over methionine 1–cysteine 45 the chain is Cytoplasmic. The ITIM motif signature appears at valine 5–leucine 10. Residues cysteine 31–proline 34 carry the LCK-binding motif motif. A helical; Signal-anchor for type II membrane protein transmembrane segment spans residues alanine 46 to leucine 66. Residues glutamine 67–serine 223 lie on the Extracellular side of the membrane. Positions histidine 101–glutamine 211 constitute a C-type lectin domain. Disulfide bonds link cysteine 122/cysteine 210 and cysteine 189/cysteine 202.

As to quaternary structure, homodimer; disulfide-linked. Interacts with tyrosine kinase LCK. Binds PTPN6/SHP-1 in a phosphorylation-dependent manner. In terms of tissue distribution, expressed in a subset of natural killer cells.

The protein localises to the membrane. Its function is as follows. Receptor for CLEC2D/OCIL. Ligand-binding contributes to inhibition of cytotoxic natural killer (NK) cells. May mediate MHC class I-independent 'missing-self' recognition of allografts, tumor cells and virus-infected cells. The chain is Killer cell lectin-like receptor subfamily B member 1B allele A from Rattus norvegicus (Rat).